The sequence spans 756 residues: Serine/threonine-protein kinase DCLK1 (756 aa).

2 positions are modified to phosphoserine: Ser32 and Ser36. Residue Thr46 is modified to Phosphothreonine. Doublecortin domains are found at residues 57-143 (KKVR…LEYT) and 186-269 (KLVT…QDDF). A disordered region spans residues 288-393 (ASASRRGTTK…QRGWRREESE (106 aa)). A compositionally biased stretch (low complexity) spans 297–313 (KSPGPSRRSKSPASTSS). 13 positions are modified to phosphoserine: Ser305, Ser307, Ser330, Ser332, Ser334, Ser337, Ser347, Ser352, Ser353, Ser355, Ser358, Cys362, and Ser364. The span at 347-364 (SQHGGSSTSLSSTKVCSS) shows a compositional bias: low complexity. The span at 366–375 (DENDGPGEGD) shows a compositional bias: acidic residues. The residue at position 392 (Ser392) is a Phosphoserine. The Protein kinase domain maps to 406–663 (YKVGRTIGDG…AVQVLEHPWV (258 aa)). Residues 412–420 (IGDGNFAVV) and Lys435 contribute to the ATP site. Catalysis depends on Asp527, which acts as the Proton acceptor. Phosphotyrosine is present on Tyr536. Positions 711 to 723 (QVFRRRRNQDVRS) are enriched in basic and acidic residues. The disordered stretch occupies residues 711–756 (QVFRRRRNQDVRSRYKAQPAPPELNSESEDYSPSSSETVRSPNSPF). Phosphoserine is present on residues Ser742, Ser751, and Ser754.

Belongs to the protein kinase superfamily. CAMK Ser/Thr protein kinase family. CaMK subfamily.

The enzyme catalyses L-seryl-[protein] + ATP = O-phospho-L-seryl-[protein] + ADP + H(+). The catalysed reaction is L-threonyl-[protein] + ATP = O-phospho-L-threonyl-[protein] + ADP + H(+). Probable kinase that may be involved in a calcium-signaling pathway controlling neuronal migration in the developing brain. May also participate in functions of the mature nervous system. This is Serine/threonine-protein kinase DCLK1 (Dclk1) from Mus musculus (Mouse).